Reading from the N-terminus, the 162-residue chain is Anaerobic nitrite reductase GLB1 (162 aa).

Residues V9 to K159 form the Globin domain. The Homodimerization signature appears at E42 to S46. The heme b site is built by K66, H70, R100, T104, and H105. The Homodimerization motif lies at D112 to E124.

It belongs to the plant globin family. Homodimer. Requires heme b as cofactor. As to expression, seeds and roots.

The protein localises to the cytoplasm. The protein resides in the nucleus. The enzyme catalyses Fe(III)-heme b-[protein] + nitric oxide + H2O = Fe(II)-heme b-[protein] + nitrite + 2 H(+). In terms of biological role, phytoglobin that reduces nitrite to nitric oxide (NO) under anoxic conditions (e.g. during flooding or in waterlogged soil). May not function as an oxygen storage or transport protein. Has an unusually high affinity for O(2) through an hexacoordinate heme iron because of a very low dissociation constant. The protein is Anaerobic nitrite reductase GLB1 of Hordeum vulgare (Barley).